A 243-amino-acid chain; its full sequence is Ribosomal RNA small subunit methyltransferase G (243 aa).

S-adenosyl-L-methionine contacts are provided by residues Gly-97, Leu-102, Val-148–Glu-149, and Arg-161.

The protein belongs to the methyltransferase superfamily. RNA methyltransferase RsmG family.

It localises to the cytoplasm. It carries out the reaction guanosine(527) in 16S rRNA + S-adenosyl-L-methionine = N(7)-methylguanosine(527) in 16S rRNA + S-adenosyl-L-homocysteine. Its function is as follows. Specifically methylates the N7 position of guanine in position 527 of 16S rRNA. The chain is Ribosomal RNA small subunit methyltransferase G from Paracidovorax citrulli (strain AAC00-1) (Acidovorax citrulli).